A 358-amino-acid chain; its full sequence is MPAMLTDVFRGHPIHLPHSHIPDFTSLRELPDSYKWTPKDDLLFSAAPSPPATGENIPLIDLDHPDATNQIGHACRTWGAFQISNHGVPLGLLQDIEFLTGSLFGLPVQRKLKSARSETGVSGYGVARIASFFNKQMWSEGFTITGSPLNDFRKLWPQHHLNYCDIVEEYEEHMKKLASKLMWLALNSLGVSEEDIEWASLSSDLNWAQAALQLNHYPVCPEPDRAMGLAAHTDSTLLTILYQNNTAGLQVFRDDLGWVTVPPFPGSLVVNVGDLFHILSNGLFKSVLHRARVNQTRARLSVAFLWGPQSDIKISPVPKLVSPVESPLYQSVTWKEYLRTKATHFNKALSMIRNHREE.

In terms of domain architecture, Fe2OG dioxygenase spans 204–308 (DLNWAQAALQ…RLSVAFLWGP (105 aa)). Residues His232, Asp234, and His289 each coordinate Fe cation. The active site involves Arg299.

This sequence belongs to the iron/ascorbate-dependent oxidoreductase family. GA3OX subfamily. The cofactor is L-ascorbate. It depends on Fe cation as a cofactor. Expressed in stems, roots, leaves, flowers, and siliques. Highly expressed near the nodes in stems and in the stamen filaments of flowers. Detected in developing cotyledons, vegetative shoot apical meristem and non-meristematic, non-elongation regions of the roots. Found in the cortex and the endodermis of the embryo axis in germinating seeds and in the placenta in developing siliques.

It catalyses the reaction gibberellin A9 + 2-oxoglutarate + O2 = gibberellin A4 + succinate + CO2. It carries out the reaction gibberellin A20 + 2-oxoglutarate + O2 = gibberellin A1 + succinate + CO2. It participates in plant hormone biosynthesis; gibberellin biosynthesis. Converts the inactive gibberellin (GA) precursors GA9 and GA20 into the bioactives gibberellins GA4 and GA1, respectively. Involved in the production of bioactive GA for vegetative growth and development. The sequence is that of Gibberellin 3-beta-dioxygenase 1 (GA3OX1) from Arabidopsis thaliana (Mouse-ear cress).